Consider the following 1057-residue polypeptide: Desmoglein-1-alpha (1057 aa).

The signal sequence occupies residues 1-23 (MDWHSFRIAALLLTSLVVLEVNS). Positions 24–49 (EFQIQVRDHNAKNGTIKWHSIRRQKR) are excised as a propeptide. 4 Cadherin domains span residues 50 to 157 (EWIK…PPVF), 158 to 269 (SMTT…IPYL), 270 to 389 (EQSS…RPGS), and 386 to 493 (RPGS…TGSE). The Extracellular segment spans residues 50–564 (EWIKFAAACR…LYGDNVHFGP (515 aa)). N-linked (GlcNAc...) asparagine glycans are attached at residues Asn-110 and Asn-180. Residues 490–552 (TGSESGGSSS…FQGDPDETLE (63 aa)) form a disordered region. The span at 510-525 (NGYQGTSSTENPQRVT) shows a compositional bias: polar residues. The chain crosses the membrane as a helical span at residues 565-585 (AGIGLLIMGFLVLGLVPFLLI). The Cytoplasmic portion of the chain corresponds to 586-1057 (CCDCGGAPGG…TKYNTVQYSK (472 aa)). Desmoglein repeat repeat units follow at residues 832 to 858 (AYHSGPGVQHPVPIPDPLGYGNVTVRE), 859 to 888 (SYTTSGTLKPSVHFHDNQQASNVVVTERVV), 889 to 918 (GPISGADLHGMLEIPDLRGGANVIVTERVI), 919 to 946 (APGSSLPTSLTIPNPQETSNVVVTERVI), and 947 to 975 (QPTSGMIGNLSMTPELSSAHNVIVTERVV).

In terms of assembly, binds to JUP/plakoglobin. Interacts with PKP2. Interacts with DSC3; there is evidence to suggest that the interaction promotes cell-cell adhesion of keratinocytes. Expressed in testis.

Its subcellular location is the cell membrane. It is found in the cell junction. The protein resides in the desmosome. It localises to the cytoplasm. The protein localises to the nucleus. Its function is as follows. Component of intercellular desmosome junctions. Involved in the interaction of plaque proteins and intermediate filaments mediating cell-cell adhesion. This Mus musculus (Mouse) protein is Desmoglein-1-alpha (Dsg1a).